Consider the following 306-residue polypeptide: Recombination-associated protein RdgC (306 aa).

This sequence belongs to the RdgC family.

The protein resides in the cytoplasm. It localises to the nucleoid. Its function is as follows. May be involved in recombination. This is Recombination-associated protein RdgC from Pseudomonas aeruginosa (strain ATCC 15692 / DSM 22644 / CIP 104116 / JCM 14847 / LMG 12228 / 1C / PRS 101 / PAO1).